A 63-amino-acid chain; its full sequence is Large ribosomal subunit protein bL28 (63 aa).

This sequence belongs to the bacterial ribosomal protein bL28 family.

The polypeptide is Large ribosomal subunit protein bL28 (Brachyspira hyodysenteriae (strain ATCC 49526 / WA1)).